The sequence spans 128 residues: Iron-sulfur cluster insertion protein ErpA 1 (128 aa).

Residues Cys47, Cys111, and Cys113 each contribute to the iron-sulfur cluster site.

This sequence belongs to the HesB/IscA family. In terms of assembly, homodimer. The cofactor is iron-sulfur cluster.

In terms of biological role, required for insertion of 4Fe-4S clusters for at least IspG. The chain is Iron-sulfur cluster insertion protein ErpA 1 from Methylococcus capsulatus (strain ATCC 33009 / NCIMB 11132 / Bath).